Reading from the N-terminus, the 267-residue chain is Tetrahydromethanopterin S-methyltransferase subunit C (267 aa).

The next 8 membrane-spanning stretches (helical) occupy residues 18–38 (LMAL…VNPV), 39–59 (IGPV…ADAI), 76–96 (YMSV…VFVV), 99–119 (IAVP…VAVL), 138–158 (ISGA…GSYT), 163–183 (LTSV…TMAI), 209–229 (FISM…WWLV), and 230–250 (SLIG…ASFE).

Belongs to the MtrC family. The complex is composed of 8 subunits; MtrA, MtrB, MtrC, MtrD, MtrE, MtrF, MtrG and MtrH.

It is found in the cell membrane. The enzyme catalyses 5-methyl-5,6,7,8-tetrahydromethanopterin + coenzyme M + 2 Na(+)(in) = 5,6,7,8-tetrahydromethanopterin + methyl-coenzyme M + 2 Na(+)(out). The protein operates within one-carbon metabolism; methanogenesis from CO(2); methyl-coenzyme M from 5,10-methylene-5,6,7,8-tetrahydromethanopterin: step 2/2. In terms of biological role, part of a complex that catalyzes the formation of methyl-coenzyme M and tetrahydromethanopterin from coenzyme M and methyl-tetrahydromethanopterin. This is an energy-conserving, sodium-ion translocating step. The chain is Tetrahydromethanopterin S-methyltransferase subunit C from Methanothermobacter marburgensis (strain ATCC BAA-927 / DSM 2133 / JCM 14651 / NBRC 100331 / OCM 82 / Marburg) (Methanobacterium thermoautotrophicum).